Reading from the N-terminus, the 269-residue chain is Putative pyruvate, phosphate dikinase regulatory protein (269 aa).

Gly147–Thr154 is an ADP binding site.

It belongs to the pyruvate, phosphate/water dikinase regulatory protein family. PDRP subfamily.

It carries out the reaction N(tele)-phospho-L-histidyl/L-threonyl-[pyruvate, phosphate dikinase] + ADP = N(tele)-phospho-L-histidyl/O-phospho-L-threonyl-[pyruvate, phosphate dikinase] + AMP + H(+). It catalyses the reaction N(tele)-phospho-L-histidyl/O-phospho-L-threonyl-[pyruvate, phosphate dikinase] + phosphate + H(+) = N(tele)-phospho-L-histidyl/L-threonyl-[pyruvate, phosphate dikinase] + diphosphate. In terms of biological role, bifunctional serine/threonine kinase and phosphorylase involved in the regulation of the pyruvate, phosphate dikinase (PPDK) by catalyzing its phosphorylation/dephosphorylation. The sequence is that of Putative pyruvate, phosphate dikinase regulatory protein from Trichlorobacter lovleyi (strain ATCC BAA-1151 / DSM 17278 / SZ) (Geobacter lovleyi).